Here is a 61-residue protein sequence, read N- to C-terminus: Sperm protamine P1 (61 aa).

The tract at residues 1–61 (MARYRHSRSR…RYSRRRRRRY (61 aa)) is disordered.

The protein belongs to the protamine P1 family. As to expression, testis.

It is found in the nucleus. Its subcellular location is the chromosome. In terms of biological role, protamines substitute for histones in the chromatin of sperm during the haploid phase of spermatogenesis. They compact sperm DNA into a highly condensed, stable and inactive complex. This Setonix brachyurus (Quokka) protein is Sperm protamine P1 (PRM1).